We begin with the raw amino-acid sequence, 359 residues long: Phospho-N-acetylmuramoyl-pentapeptide-transferase (359 aa).

10 helical membrane-spanning segments follow: residues 3 to 23 (QIMI…PALI), 55 to 75 (VAIL…GLAF), 80 to 100 (ITAS…VGFL), 117 to 137 (TAKT…VLQF), 156 to 176 (IATV…VVSA), 187 to 207 (LDGL…LITF), 231 to 251 (LALI…WNAA), 255 to 275 (IFMG…LSVT), 280 to 300 (ILAV…VLQI), and 334 to 354 (FWLL…GEWL).

The protein belongs to the glycosyltransferase 4 family. MraY subfamily. Requires Mg(2+) as cofactor.

The protein localises to the cell inner membrane. It carries out the reaction UDP-N-acetyl-alpha-D-muramoyl-L-alanyl-gamma-D-glutamyl-meso-2,6-diaminopimeloyl-D-alanyl-D-alanine + di-trans,octa-cis-undecaprenyl phosphate = di-trans,octa-cis-undecaprenyl diphospho-N-acetyl-alpha-D-muramoyl-L-alanyl-D-glutamyl-meso-2,6-diaminopimeloyl-D-alanyl-D-alanine + UMP. Its pathway is cell wall biogenesis; peptidoglycan biosynthesis. Functionally, catalyzes the initial step of the lipid cycle reactions in the biosynthesis of the cell wall peptidoglycan: transfers peptidoglycan precursor phospho-MurNAc-pentapeptide from UDP-MurNAc-pentapeptide onto the lipid carrier undecaprenyl phosphate, yielding undecaprenyl-pyrophosphoryl-MurNAc-pentapeptide, known as lipid I. The polypeptide is Phospho-N-acetylmuramoyl-pentapeptide-transferase (Mycobacterium marinum (strain ATCC BAA-535 / M)).